A 475-amino-acid polypeptide reads, in one-letter code: Aspartyl/glutamyl-tRNA(Asn/Gln) amidotransferase subunit B (475 aa).

This sequence belongs to the GatB/GatE family. GatB subfamily. As to quaternary structure, heterotrimer of A, B and C subunits.

The catalysed reaction is L-glutamyl-tRNA(Gln) + L-glutamine + ATP + H2O = L-glutaminyl-tRNA(Gln) + L-glutamate + ADP + phosphate + H(+). The enzyme catalyses L-aspartyl-tRNA(Asn) + L-glutamine + ATP + H2O = L-asparaginyl-tRNA(Asn) + L-glutamate + ADP + phosphate + 2 H(+). Allows the formation of correctly charged Asn-tRNA(Asn) or Gln-tRNA(Gln) through the transamidation of misacylated Asp-tRNA(Asn) or Glu-tRNA(Gln) in organisms which lack either or both of asparaginyl-tRNA or glutaminyl-tRNA synthetases. The reaction takes place in the presence of glutamine and ATP through an activated phospho-Asp-tRNA(Asn) or phospho-Glu-tRNA(Gln). The sequence is that of Aspartyl/glutamyl-tRNA(Asn/Gln) amidotransferase subunit B from Thermodesulfovibrio yellowstonii (strain ATCC 51303 / DSM 11347 / YP87).